The primary structure comprises 114 residues: Fumarate reductase subunit D (114 aa).

A run of 3 helical transmembrane segments spans residues 24 to 44 (VSAI…PFGL), 50 to 70 (LITF…TIFP), and 92 to 112 (GGFI…FAVI).

This sequence belongs to the FrdD family. In terms of assembly, part of an enzyme complex containing four subunits: a flavoprotein (FrdA), an iron-sulfur protein (FrdB), and two hydrophobic anchor proteins (FrdC and FrdD).

The protein localises to the cell inner membrane. In terms of biological role, anchors the catalytic components of the fumarate reductase complex to the cell membrane, binds quinones. The chain is Fumarate reductase subunit D from Haemophilus influenzae (strain 86-028NP).